The chain runs to 890 residues: Leucine--tRNA ligase (890 aa).

The 'HIGH' region motif lies at 48 to 58 (PYPSGKLHMGH). Positions 645–649 (KMSKS) match the 'KMSKS' region motif. Lys-648 provides a ligand contact to ATP.

The protein belongs to the class-I aminoacyl-tRNA synthetase family.

Its subcellular location is the cytoplasm. It carries out the reaction tRNA(Leu) + L-leucine + ATP = L-leucyl-tRNA(Leu) + AMP + diphosphate. This is Leucine--tRNA ligase from Polynucleobacter necessarius subsp. necessarius (strain STIR1).